We begin with the raw amino-acid sequence, 648 residues long: MTALLELCNVSRSYPSGEEQVAVLKDISLQIHAGEMVAIVGVSGSGKSTLMNILGCLDKPTSGTYRVAGRDVSTLDPDALAQLRREHFGFIFQRYHLLSHLTAAQNVEIPAVYAGIERKKRQARARELLLRLGLSDRVDYPPSQLSGGQQQRVSIARALMNGGQVILADEPTGALDSHSGEEVMAILRQLRDRGHTVIIVTHDPLIAAQAERIIEIHDGKIVHNPPAQEKKREQGVDAAVVNTAPGWRQFASSFREALSMAWLAMAANKMRTLLTMLGIIIGIASVVSIVVVGDAAKQMVLADIRAMGTNTIDIHPGKDFGDDNPQYRQALKYDDLVAIQKQPWVNSATPSVSKSLRLRYGNIDIAVNANGVSGDYFNVYGMSFREGNTFNAVQQQDRAQVVVLDANTRRQLFPNKANVVGEVVLAGNMPVIVIGVAEEKPSMYGNSNLLQVWLPYSTMSDRIMGQSWLNSITVRVKDGVDSDQAEQQLTRLLTLRHGKKDFFTWNMDSVLKTAEKTTYTLQLFLTLVAVISLVVGGIGVMNIMLVSVTERTREIGIRMAVGARASDVLQQFLIEAVLVCLVGGALGISLSMFIAFMLQLFLPGWEIGFSLTALASAFLCSTFTGILFGWLPARNAARLDPVDALARE.

In terms of domain architecture, ABC transporter spans 5 to 243; sequence LELCNVSRSY…QGVDAAVVNT (239 aa). 41 to 48 is an ATP binding site; the sequence is GVSGSGKS. The next 5 membrane-spanning stretches (helical) occupy residues 273 to 293, 417 to 437, 523 to 543, 577 to 597, and 611 to 631; these read LLTM…VVVG, ANVV…IGVA, LFLT…VMNI, VLVC…IAFM, and LTAL…FGWL.

This sequence belongs to the ABC transporter superfamily. Macrolide exporter (TC 3.A.1.122) family. As to quaternary structure, homodimer. Part of the tripartite efflux system MacAB-TolC, which is composed of an inner membrane transporter, MacB, a periplasmic membrane fusion protein, MacA, and an outer membrane component, TolC. The complex forms a large protein conduit and can translocate molecules across both the inner and outer membranes. Interacts with MacA.

It is found in the cell inner membrane. Its function is as follows. Part of the tripartite efflux system MacAB-TolC. MacB is a non-canonical ABC transporter that contains transmembrane domains (TMD), which form a pore in the inner membrane, and an ATP-binding domain (NBD), which is responsible for energy generation. Confers resistance against macrolides. This is Macrolide export ATP-binding/permease protein MacB from Salmonella typhimurium (strain LT2 / SGSC1412 / ATCC 700720).